The sequence spans 186 residues: MDDYTQSINDAVKCLRQGGVIAYPTEAVYGLGCDPFNHDAVAQLLTIKKRSIKKGFILIASEWKQVEPLTEPIDPKALARVFDTWPGPFTWTFPASKEAPHWITGQHSTIAIRVTAHPLAKLLCQRFAGPLISSSANQEGEPPIRDVKILRLVFGNKIDKILEGPLGPTHRPTPIRDAITGEILRL.

The 182-residue stretch at 5–186 folds into the YrdC-like domain; sequence TQSINDAVKC…DAITGEILRL (182 aa).

Belongs to the SUA5 family. TsaC subfamily.

It is found in the cytoplasm. It carries out the reaction L-threonine + hydrogencarbonate + ATP = L-threonylcarbamoyladenylate + diphosphate + H2O. Its function is as follows. Required for the formation of a threonylcarbamoyl group on adenosine at position 37 (t(6)A37) in tRNAs that read codons beginning with adenine. Catalyzes the conversion of L-threonine, HCO(3)(-)/CO(2) and ATP to give threonylcarbamoyl-AMP (TC-AMP) as the acyladenylate intermediate, with the release of diphosphate. The polypeptide is Threonylcarbamoyl-AMP synthase (Coxiella burnetii (strain RSA 493 / Nine Mile phase I)).